Consider the following 356-residue polypeptide: tRNA N6-adenosine threonylcarbamoyltransferase (356 aa).

Histidine 115 and histidine 119 together coordinate Fe cation. Substrate-binding positions include 138 to 142 (LVSGG), aspartate 171, glycine 184, and asparagine 283. Aspartate 311 serves as a coordination point for Fe cation.

This sequence belongs to the KAE1 / TsaD family. Fe(2+) serves as cofactor.

It localises to the cytoplasm. The enzyme catalyses L-threonylcarbamoyladenylate + adenosine(37) in tRNA = N(6)-L-threonylcarbamoyladenosine(37) in tRNA + AMP + H(+). Functionally, required for the formation of a threonylcarbamoyl group on adenosine at position 37 (t(6)A37) in tRNAs that read codons beginning with adenine. Is involved in the transfer of the threonylcarbamoyl moiety of threonylcarbamoyl-AMP (TC-AMP) to the N6 group of A37, together with TsaE and TsaB. TsaD likely plays a direct catalytic role in this reaction. The polypeptide is tRNA N6-adenosine threonylcarbamoyltransferase (Prochlorococcus marinus (strain MIT 9312)).